The following is a 121-amino-acid chain: Mediator of RNA polymerase II transcription subunit 22 (121 aa).

This sequence belongs to the Mediator complex subunit 22 family. Component of the Mediator complex.

The protein resides in the nucleus. Its function is as follows. Component of the Mediator complex, a coactivator involved in the regulated transcription of nearly all RNA polymerase II-dependent genes. Mediator functions as a bridge to convey information from gene-specific regulatory proteins to the basal RNA polymerase II transcription machinery. Mediator is recruited to promoters by direct interactions with regulatory proteins and serves as a scaffold for the assembly of a functional preinitiation complex with RNA polymerase II and the general transcription factors. The sequence is that of Mediator of RNA polymerase II transcription subunit 22 (SRB6) from Kluyveromyces lactis (strain ATCC 8585 / CBS 2359 / DSM 70799 / NBRC 1267 / NRRL Y-1140 / WM37) (Yeast).